The following is a 267-amino-acid chain: MASSEETPRSLAGKVALVTGAGRGIGKGIAVELAKRGASVVVNYNSAEKPAQEVVDEIAKTGSRAVAIKADITKVPEVSRLFQEALQHFGHLDIVVSNSGTEVFKPEEEVTEEDYDRVFNLNTRAQFFIAQHAYVHLRNGGRIVLMSSVAANMSGIPNHALYAGSKAAVEGFTRSFAVDAGHRKITVNAIAPGGVKTDMYDANAWHYVPNGKPGMPMEEIDKGLAAFCPLGRVAVPQDIGRVVAFLAHPDSEWVNGQVILLTGGSVT.

Ile25, Asn45, Asp71, and Asn98 together coordinate NADP(+). Residues Ser147 and Ser148 each act as proton donor in the active site. Tyr162, Lys166, Val195, and Thr197 together coordinate NADP(+). Tyr162 (proton acceptor) is an active-site residue. Lys166 (lowers pKa of active site Tyr) is an active-site residue.

The protein belongs to the short-chain dehydrogenases/reductases (SDR) family.

In terms of biological role, hydroxynaphthalene reductase-like protein; part of the Pks2 gene cluster that mediates the formation of infectious structures (appressoria), enabling these fungi to kill insects faster. The product of the Pks2 gene cluster is different from the one of Pks1 and has still not been identified. The chain is Hydroxynaphthalene reductase-like protein Arp2 from Metarhizium majus (strain ARSEF 297).